Reading from the N-terminus, the 87-residue chain is uncharacterized protein (87 aa).

The tract at residues 43–87 (NQGYGQNFGDASGFMGTRSHVDDRDQIDSPASFESEAVNSSIKRK) is disordered.

This is an uncharacterized protein from Bacillus subtilis (strain 168).